Reading from the N-terminus, the 529-residue chain is Peptide chain release factor 3 (529 aa).

The 270-residue stretch at 11-280 (AKRRTFAIIS…GLVEWAPAPM (270 aa)) folds into the tr-type G domain. Residues 20-27 (SHPDAGKT), 88-92 (DTPGH), and 142-145 (NKLD) each bind GTP.

This sequence belongs to the TRAFAC class translation factor GTPase superfamily. Classic translation factor GTPase family. PrfC subfamily.

The protein resides in the cytoplasm. Its function is as follows. Increases the formation of ribosomal termination complexes and stimulates activities of RF-1 and RF-2. It binds guanine nucleotides and has strong preference for UGA stop codons. It may interact directly with the ribosome. The stimulation of RF-1 and RF-2 is significantly reduced by GTP and GDP, but not by GMP. This is Peptide chain release factor 3 from Shigella flexneri.